Reading from the N-terminus, the 280-residue chain is Type II restriction enzyme MboI (280 aa).

This sequence belongs to the DpnII type II restriction endonuclease family.

It carries out the reaction Endonucleolytic cleavage of DNA to give specific double-stranded fragments with terminal 5'-phosphates.. Functionally, a P subtype restriction enzyme that recognizes the double-stranded unmethylated sequence 5'-GATC-3' and cleaves before G-1. The polypeptide is Type II restriction enzyme MboI (mboIR) (Moraxella bovis).